The following is a 96-amino-acid chain: Large ribosomal subunit protein uL23cz (96 aa).

It belongs to the universal ribosomal protein uL23 family. As to quaternary structure, part of the 50S ribosomal subunit.

It localises to the plastid. Its subcellular location is the chloroplast. Binds to 23S rRNA. This Sorghum bicolor (Sorghum) protein is Large ribosomal subunit protein uL23cz (rpl23-A).